The following is a 75-amino-acid chain: DNA-directed RNA polymerase subunit omega (75 aa).

It belongs to the RNA polymerase subunit omega family. As to quaternary structure, in cyanobacteria the RNAP catalytic core is composed of 2 alpha, 1 beta, 1 beta', 1 gamma and 1 omega subunit. When a sigma factor is associated with the core the holoenzyme is formed, which can initiate transcription.

The enzyme catalyses RNA(n) + a ribonucleoside 5'-triphosphate = RNA(n+1) + diphosphate. In terms of biological role, promotes RNA polymerase assembly. Latches the N- and C-terminal regions of the beta' subunit thereby facilitating its interaction with the beta and alpha subunits. This is DNA-directed RNA polymerase subunit omega from Microcystis aeruginosa (strain NIES-843 / IAM M-2473).